We begin with the raw amino-acid sequence, 256 residues long: Pimeloyl-[acyl-carrier protein] methyl ester esterase (256 aa).

Residues 17 to 241 (VYLIHGWGAN…KAAHAPFLSH (225 aa)) enclose the AB hydrolase-1 domain. Substrate-binding positions include Trp-23, 83-84 (SL), and 145-149 (FLQLQ). Ser-83 functions as the Nucleophile in the catalytic mechanism. Residues Asp-207 and His-235 contribute to the active site. A substrate-binding site is contributed by His-235.

The protein belongs to the AB hydrolase superfamily. Carboxylesterase BioH family. Monomer.

Its subcellular location is the cytoplasm. The catalysed reaction is 6-carboxyhexanoyl-[ACP] methyl ester + H2O = 6-carboxyhexanoyl-[ACP] + methanol + H(+). It functions in the pathway cofactor biosynthesis; biotin biosynthesis. In terms of biological role, the physiological role of BioH is to remove the methyl group introduced by BioC when the pimeloyl moiety is complete. It allows to synthesize pimeloyl-ACP via the fatty acid synthetic pathway through the hydrolysis of the ester bonds of pimeloyl-ACP esters. The polypeptide is Pimeloyl-[acyl-carrier protein] methyl ester esterase (Neisseria meningitidis serogroup C / serotype 2a (strain ATCC 700532 / DSM 15464 / FAM18)).